The sequence spans 474 residues: Probable diacyglycerol O-acyltransferase Tgs4 (474 aa).

The active-site Proton acceptor is the His-135.

This sequence belongs to the long-chain O-acyltransferase family.

It carries out the reaction an acyl-CoA + a 1,2-diacyl-sn-glycerol = a triacyl-sn-glycerol + CoA. Its pathway is glycerolipid metabolism; triacylglycerol biosynthesis. Functionally, required for maintaining the appropriate mycolic acid composition and permeability of the envelope on its exposure to acidic pH. The chain is Probable diacyglycerol O-acyltransferase Tgs4 (tgs4) from Mycobacterium tuberculosis (strain CDC 1551 / Oshkosh).